Reading from the N-terminus, the 246-residue chain is uncharacterized protein (246 aa).

Positions Glu-120 to Ser-149 are disordered. Residues Thr-130–Ser-149 show a composition bias toward low complexity.

This is an uncharacterized protein from Caenorhabditis elegans.